The chain runs to 142 residues: Acidic phospholipase A2 PA4 (142 aa).

Ca(2+) is bound by residues tryptophan 10, glycine 12, and glycine 14. Intrachain disulfides connect cysteine 11–cysteine 33, cysteine 32–cysteine 72, and cysteine 39–cysteine 65. Histidine 36 is a catalytic residue. A Ca(2+)-binding site is contributed by aspartate 37.

This sequence belongs to the phospholipase A2 family. Group III subfamily. Ca(2+) serves as cofactor. Expressed by the venom gland.

It is found in the secreted. It carries out the reaction a 1,2-diacyl-sn-glycero-3-phosphocholine + H2O = a 1-acyl-sn-glycero-3-phosphocholine + a fatty acid + H(+). Its function is as follows. PLA2 catalyzes the calcium-dependent hydrolysis of the 2-acyl groups in 3-sn-phosphoglycerides. The chain is Acidic phospholipase A2 PA4 from Heloderma suspectum (Gila monster).